Here is a 175-residue protein sequence, read N- to C-terminus: T-cell surface glycoprotein CD3 epsilon chain (175 aa).

The first 21 residues, 1–21, serve as a signal peptide directing secretion; it reads MRCEVPLPLLGLLLCVVGAAA. At 22 to 100 the chain is on the extracellular side; it reads QGGQEEFAVE…VCANCEELDT (79 aa). Residues 101 to 121 traverse the membrane as a helical segment; sequence FTVVGIIAADLLITLGVLILV. The Cytoplasmic portion of the chain corresponds to 122–175; sequence YYFSKNKKGQSRAAAGSRPRAQKMRRPPPVPNPDYEPIRKGQRDVYAGLEHRGF. Residues 133-163 form a disordered region; that stretch reads RAAAGSRPRAQKMRRPPPVPNPDYEPIRKGQ. Residues 146-173 enclose the ITAM domain; the sequence is RRPPPVPNPDYEPIRKGQRDVYAGLEHR.

As to quaternary structure, the TCR/CD3 complex of T-lymphocytes consists of either a TCR alpha/beta or TCR gamma/delta heterodimer coexpressed at the cell surface with the invariant subunits of CD3 labeled gamma, delta, epsilon, zeta, and eta.

Its subcellular location is the cell membrane. Functionally, the CD3 complex mediates signal transduction, resulting in T-cell activation and proliferation. Required for normal immune responses. This is T-cell surface glycoprotein CD3 epsilon chain (CD3E) from Gallus gallus (Chicken).